We begin with the raw amino-acid sequence, 452 residues long: 1-aminocyclopropane-1-carboxylate synthase 3 (452 aa).

Lys-283 carries the N6-(pyridoxal phosphate)lysine modification.

Belongs to the class-I pyridoxal-phosphate-dependent aminotransferase family. The cofactor is pyridoxal 5'-phosphate. In terms of tissue distribution, expressed in leaves. Expressed in roots and leaf blades. Expressed at low levels in leaf sheaths and shoot bases.

The enzyme catalyses S-adenosyl-L-methionine = 1-aminocyclopropane-1-carboxylate + S-methyl-5'-thioadenosine + H(+). It functions in the pathway alkene biosynthesis; ethylene biosynthesis via S-adenosyl-L-methionine; ethylene from S-adenosyl-L-methionine: step 1/2. In terms of biological role, catalyzes the formation of 1-aminocyclopropane-1-carboxylate, a direct precursor of ethylene in higher plants. This chain is 1-aminocyclopropane-1-carboxylate synthase 3, found in Oryza sativa subsp. japonica (Rice).